The chain runs to 530 residues: Alkali-sensitive linkage protein 1 (530 aa).

The N-terminal stretch at 1-18 (MRTTFATVALAFLSTVGA) is a signal peptide. N-linked (GlcNAc...) asparagine glycosylation is present at Asn-55. The tract at residues 69-90 (SVTESSDDGASTALPTTSTESV) is disordered. 2 N-linked (GlcNAc...) asparagine glycosylation sites follow: Asn-120 and Asn-128.

The protein resides in the endoplasmic reticulum. The protein localises to the golgi apparatus. It is found in the secreted. Its subcellular location is the cell wall. This Schizosaccharomyces pombe (strain 972 / ATCC 24843) (Fission yeast) protein is Alkali-sensitive linkage protein 1 (asl1).